The following is a 199-amino-acid chain: Hematopoietic prostaglandin D synthase (199 aa).

The GST N-terminal domain occupies 2 to 79; that stretch reads PNYKLTYFNM…YLTKNTDLAG (78 aa). Glutathione-binding positions include tyrosine 8, arginine 14, tryptophan 39, 49–51, and 63–64; these read GKI and QS. One can recognise a GST C-terminal domain in the interval 81 to 199; it reads TEMEQCHVDA…WIKRRPQTKL (119 aa).

It belongs to the GST superfamily. Sigma family. In terms of assembly, homodimer. Glutathione is required as a cofactor. In terms of tissue distribution, expressed in a number of megakaryocytic cell lines but not in platelets. Highly expressed in adipose tissue, macrophages and placenta. Also expressed at lower levels in lung, heart, lymph nodes, appendix, bone marrow and fetal liver.

It localises to the cytoplasm. It catalyses the reaction prostaglandin H2 = prostaglandin D2. The enzyme catalyses RX + glutathione = an S-substituted glutathione + a halide anion + H(+). The catalysed reaction is 2-glyceryl-prostaglandin H2 = 2-glyceryl-prostaglandin D2. Prostaglandin PGD2 synthesis is stimulated by calcium and magnesium ions. One calcium or magnesium ion is bound between the subunits of the homodimer. The interactions with the protein are for the most part mediated via water molecules. Magnesium increases the affinity for glutathione, while calcium has no effect on the affinity for glutathione. Functionally, bifunctional enzyme which catalyzes both the conversion of PGH2 to PGD2, a prostaglandin involved in smooth muscle contraction/relaxation and a potent inhibitor of platelet aggregation, and the conjugation of glutathione with a wide range of aryl halides and organic isothiocyanates. Also exhibits low glutathione-peroxidase activity towards cumene hydroperoxide. The chain is Hematopoietic prostaglandin D synthase from Homo sapiens (Human).